Reading from the N-terminus, the 259-residue chain is BTB/POZ domain-containing protein KCTD4 (259 aa).

In terms of domain architecture, BTB spans 33 to 134 (TLMTLNVGGY…EVKSRWEKEQ (102 aa)).

In Mus musculus (Mouse), this protein is BTB/POZ domain-containing protein KCTD4 (Kctd4).